We begin with the raw amino-acid sequence, 139 residues long: Hydrogenase maturation factor HypA (139 aa).

Residues methionine 1 and histidine 2 each coordinate Ni(2+). Residues cysteine 73 and cysteine 76 each coordinate Zn(2+). Position 98 (histidine 98) interacts with Ni(2+). Zn(2+)-binding residues include cysteine 110 and cysteine 113.

Belongs to the HypA/HybF family. As to quaternary structure, monomer and homodimer. Could also form hexamers. Forms a complex with HypB.

Involved in the maturation of [NiFe] hydrogenases. Required for nickel insertion into the metal center of the hydrogenase. This is Hydrogenase maturation factor HypA from Thermococcus kodakarensis (strain ATCC BAA-918 / JCM 12380 / KOD1) (Pyrococcus kodakaraensis (strain KOD1)).